Consider the following 424-residue polypeptide: Serine--tRNA ligase (424 aa).

L-serine is bound at residue 230 to 232 (TSE). ATP contacts are provided by residues 261–263 (RKE) and V277. E284 is a binding site for L-serine. 348–351 (ELTS) contacts ATP. T382 contacts L-serine.

The protein belongs to the class-II aminoacyl-tRNA synthetase family. Type-1 seryl-tRNA synthetase subfamily. Homodimer. The tRNA molecule binds across the dimer.

The protein localises to the cytoplasm. It catalyses the reaction tRNA(Ser) + L-serine + ATP = L-seryl-tRNA(Ser) + AMP + diphosphate + H(+). The enzyme catalyses tRNA(Sec) + L-serine + ATP = L-seryl-tRNA(Sec) + AMP + diphosphate + H(+). It functions in the pathway aminoacyl-tRNA biosynthesis; selenocysteinyl-tRNA(Sec) biosynthesis; L-seryl-tRNA(Sec) from L-serine and tRNA(Sec): step 1/1. In terms of biological role, catalyzes the attachment of serine to tRNA(Ser). Is also able to aminoacylate tRNA(Sec) with serine, to form the misacylated tRNA L-seryl-tRNA(Sec), which will be further converted into selenocysteinyl-tRNA(Sec). This is Serine--tRNA ligase from Nocardioides sp. (strain ATCC BAA-499 / JS614).